We begin with the raw amino-acid sequence, 549 residues long: Cytoplasmic trehalase (549 aa).

Residues R168, 175–176, N212, 221–223, 292–294, and G324 each bind substrate; these read WD, RSQ, and RDE. Active-site proton donor/acceptor residues include D326 and E509. E525 serves as a coordination point for substrate.

This sequence belongs to the glycosyl hydrolase 37 family. In terms of assembly, monomer.

Its subcellular location is the cytoplasm. The catalysed reaction is alpha,alpha-trehalose + H2O = alpha-D-glucose + beta-D-glucose. The protein operates within glycan degradation; trehalose degradation; D-glucose from alpha,alpha-trehalose: step 1/1. Its function is as follows. Hydrolyzes trehalose to glucose. Could be involved, in cells returning to low osmolarity conditions, in the utilization of the accumulated cytoplasmic trehalose, which was synthesized in response to high osmolarity. The protein is Cytoplasmic trehalase of Shigella flexneri serotype 5b (strain 8401).